We begin with the raw amino-acid sequence, 274 residues long: Type III pantothenate kinase (274 aa).

Position 6 to 13 (Asp6 to Val13) interacts with ATP. Residues Tyr110 and Gly117–Arg120 each bind substrate. The active-site Proton acceptor is the Asp119. A K(+)-binding site is contributed by Asp139. Position 142 (Thr142) interacts with ATP. Thr194 serves as a coordination point for substrate.

This sequence belongs to the type III pantothenate kinase family. As to quaternary structure, homodimer. NH4(+) is required as a cofactor. K(+) serves as cofactor.

It localises to the cytoplasm. The enzyme catalyses (R)-pantothenate + ATP = (R)-4'-phosphopantothenate + ADP + H(+). The protein operates within cofactor biosynthesis; coenzyme A biosynthesis; CoA from (R)-pantothenate: step 1/5. Functionally, catalyzes the phosphorylation of pantothenate (Pan), the first step in CoA biosynthesis. This is Type III pantothenate kinase from Koribacter versatilis (strain Ellin345).